The chain runs to 363 residues: tRNA N6-adenosine threonylcarbamoyltransferase (363 aa).

Fe cation is bound by residues His121 and His125. Substrate-binding positions include 143 to 147 (LASGG), Asp176, Gly189, and Asn287. Asp315 lines the Fe cation pocket.

This sequence belongs to the KAE1 / TsaD family. Requires Fe(2+) as cofactor.

The protein localises to the cytoplasm. It catalyses the reaction L-threonylcarbamoyladenylate + adenosine(37) in tRNA = N(6)-L-threonylcarbamoyladenosine(37) in tRNA + AMP + H(+). In terms of biological role, required for the formation of a threonylcarbamoyl group on adenosine at position 37 (t(6)A37) in tRNAs that read codons beginning with adenine. Is involved in the transfer of the threonylcarbamoyl moiety of threonylcarbamoyl-AMP (TC-AMP) to the N6 group of A37, together with TsaE and TsaB. TsaD likely plays a direct catalytic role in this reaction. This is tRNA N6-adenosine threonylcarbamoyltransferase from Rhodopseudomonas palustris (strain BisB5).